The primary structure comprises 414 residues: Probable protein phosphatase 2C 80 (414 aa).

The 238-residue stretch at 174-411 folds into the PPM-type phosphatase domain; it reads SCYLPHPEKE…DDITAVVSYV (238 aa). The Mn(2+) site is built by Asp-204, Gly-205, Asp-336, and Asp-402.

This sequence belongs to the PP2C family. Mg(2+) serves as cofactor. Mn(2+) is required as a cofactor.

It catalyses the reaction O-phospho-L-seryl-[protein] + H2O = L-seryl-[protein] + phosphate. It carries out the reaction O-phospho-L-threonyl-[protein] + H2O = L-threonyl-[protein] + phosphate. This is Probable protein phosphatase 2C 80 from Arabidopsis thaliana (Mouse-ear cress).